Here is a 252-residue protein sequence, read N- to C-terminus: Putative phosphonates utilization ATP-binding protein PhnK (252 aa).

An ABC transporter domain is found at 6–246 (LSVNNLTHLY…PHHPYTQLLV (241 aa)). ATP is bound at residue 38 to 45 (GESGSGKT).

The protein belongs to the ABC transporter superfamily. As to quaternary structure, forms a complex with PhnG, PhnH, PhnI and PhnJ with the suggested composition PhnG(4)H(2)I(2)J(2)K.

In terms of biological role, belongs to an operon involved in alkylphosphonate uptake and C-P lyase. Exact function not known. PhnK is not required for the ribophosphonate triphosphate (RPnTP) synthase reaction. The protein is Putative phosphonates utilization ATP-binding protein PhnK (phnK) of Escherichia coli (strain K12).